A 331-amino-acid chain; its full sequence is Ornithine carbamoyltransferase, catabolic (331 aa).

Carbamoyl phosphate-binding positions include 57–60 (STRT), Gln-82, Arg-106, and 133–136 (HPTQ). L-ornithine-binding positions include Asn-166, Asp-230, and 234–235 (SM). Carbamoyl phosphate contacts are provided by residues 272 to 273 (CL) and Arg-317.

The protein belongs to the aspartate/ornithine carbamoyltransferase superfamily. OTCase family.

It is found in the cytoplasm. It catalyses the reaction carbamoyl phosphate + L-ornithine = L-citrulline + phosphate + H(+). The protein operates within amino-acid degradation; L-arginine degradation via ADI pathway; carbamoyl phosphate from L-arginine: step 2/2. Functionally, reversibly catalyzes the transfer of the carbamoyl group from carbamoyl phosphate (CP) to the N(epsilon) atom of ornithine (ORN) to produce L-citrulline. In Clostridium perfringens (strain ATCC 13124 / DSM 756 / JCM 1290 / NCIMB 6125 / NCTC 8237 / Type A), this protein is Ornithine carbamoyltransferase, catabolic (arcB).